The sequence spans 606 residues: Glucose methanol choline oxidoreductase atC (606 aa).

An N-terminal signal peptide occupies residues 1–19; sequence MRVFPTYIAVSGLFGGAFA. Asparagine 43, asparagine 69, asparagine 87, asparagine 290, asparagine 368, asparagine 418, asparagine 421, and asparagine 552 each carry an N-linked (GlcNAc...) asparagine glycan.

The protein belongs to the GMC oxidoreductase family.

It carries out the reaction terremutin + A = terreate + AH2. Its pathway is secondary metabolite biosynthesis. Its function is as follows. Glucose methanol choline oxidoreductase; part of the gene cluster that mediates the biosynthesis of terreic acid, a quinone epoxide inhibitor of Bruton's tyrosine kinase. The first step of the pathway is the synthesis of 6-methylsalicylic acid (6-MSA) by the 6-methylsalicylic acid synthase atX. In the biosynthesis of 6-MSA, atX utilizes one acetyl-CoA and three malonyl-CoAs as its substrates and catalyzes a series of programmed reactions including Claisen condensation, reduction, aldol cyclization, and the hydrolytic cleavage that yields 6-MSA. The 6-methylsalicylate 1-monooxygenase atA then catalyzes the decarboxylative hydroxylation of 6-MSA to 3-methylcatechol. The next step is the conversion of 3-methylcatechol to 3-methyl-1,2,4-benzenetriol by cytochrome P450 monooxygenase atE, which is enhanced by cytochrome P450 monooxygenase atG. Then, the epoxidase atD catalyzes the epoxidation and hydroxyl oxidation of 3-methyl-1,2,4-benzenetriol to terremutin. Lastly, GMC oxidoreductase atC oxidizes terremutin to terreic acid. In Aspergillus terreus (strain NIH 2624 / FGSC A1156), this protein is Glucose methanol choline oxidoreductase atC.